The sequence spans 397 residues: Purine ribonucleoside efflux pump NepI (397 aa).

The Cytoplasmic portion of the chain corresponds to 1–21 (MNENIAEKFRADGVARPNWSA). The helical transmembrane segment at 22 to 42 (VFAVAFCVACLITVEFLPVSL) threads the bilayer. Residues 43 to 54 (LTPMAQDLGISE) are Periplasmic-facing. A helical transmembrane segment spans residues 55–75 (GVAGQSVTVTAFVAMFSSLFI). At 76-85 (TQIIQATDRR) the chain is on the cytoplasmic side. Residues 86 to 106 (YIVILFAVLLTASCLMVSFAN) traverse the membrane as a helical segment. A topological domain (periplasmic) is located at residue serine 107. A helical transmembrane segment spans residues 108–128 (FTLLLLGRACLGLALGGFWAM). The Cytoplasmic portion of the chain corresponds to 129–147 (SASLTMRLVPARTVPKALS). Residues 148–168 (VIFGAVSIALVIAAPLGSFLG) form a helical membrane-spanning segment. The Periplasmic portion of the chain corresponds to 169-175 (GIIGWRN). A helical membrane pass occupies residues 176–196 (VFNAAAVMGVLCVIWVVKSLP). Residues 197–215 (SLPGEPSHQKQNMFSLLQR) are Cytoplasmic-facing. A helical transmembrane segment spans residues 216–236 (PGVMAGMIAIFMSFAGQFAFF). The Periplasmic portion of the chain corresponds to 237–255 (TYIRPVYMNLAGFDVDGLT). A helical membrane pass occupies residues 256–276 (LVLLSFGIASFVGTSFSSYVL). Topologically, residues 277–281 (KRSVK) are cytoplasmic. A helical membrane pass occupies residues 282–302 (LALAGAPLLLALSALTLIVWG). Residues 303 to 305 (SDK) are Periplasmic-facing. A helical transmembrane segment spans residues 306–326 (TVAAVIAIIWGLAFALVPVGW). At 327 to 343 (STWITRSLADQAEKAGS) the chain is on the cytoplasmic side. The helical transmembrane segment at 344–364 (IQVAVIQLANTCGAAVGGYAL) threads the bilayer. At 365 to 366 (DN) the chain is on the periplasmic side. A helical membrane pass occupies residues 367–387 (FGLLSPLALSGGLMLLTALVV). At 388-397 (AAKVRITPMS) the chain is on the cytoplasmic side.

This sequence belongs to the major facilitator superfamily. DHA1 family. NepI (TC 2.A.1.2.26) subfamily.

The protein localises to the cell inner membrane. It carries out the reaction inosine(in) + H(+)(out) = inosine(out) + H(+)(in). The catalysed reaction is guanosine(in) + H(+)(out) = guanosine(out) + H(+)(in). Its function is as follows. Involved in the efflux of purine ribonucleosides, such as inosine and guanosine. In Salmonella paratyphi B (strain ATCC BAA-1250 / SPB7), this protein is Purine ribonucleoside efflux pump NepI.